We begin with the raw amino-acid sequence, 973 residues long: Sensor histidine kinase TmoS (973 aa).

A PAS 1 domain is found at 32 to 103; that stretch reads REELARIIFD…NQKRLVEAAS (72 aa). The PAC 1 domain maps to 108-162; the sequence is VRCDIEILGKSGGREVIAVDFSLLPIRDEQENIVFLLAEGRNITDKKKAEAMLAL. The Histidine kinase 1 domain occupies 187-405; sequence KVSHELRTPL…LFQVKLPLNA (219 aa). Histidine 190 is subject to Phosphohistidine; by autocatalysis. The Response regulatory domain occupies 452-567; it reads RVLIVEDNPD…ELRARVSNLI (116 aa). Position 500 is a 4-aspartylphosphate (aspartate 500). One can recognise a PAS 2 domain in the interval 611 to 681; that stretch reads SEARWKAVYE…QRLARLLQSG (71 aa). One can recognise a PAC 2 domain in the interval 685 to 737; sequence YSVECSYLCKNGSTIWANASVSLMSPRVDEPQVILQIIDDITEKKQAQETLNQ. The region spanning 757–973 is the Histidine kinase 2 domain; that stretch reads YIAHEINQPL…ACFFVSIPVS (217 aa). Histidine 760 carries the post-translational modification Phosphohistidine.

Post-translationally, autophosphorylated. Activation requires a sequential transfer of a phosphate group from a His in the primary transmitter domain, to an Asp in the receiver domain and to a His in the secondary transmitter domain.

Its subcellular location is the cytoplasm. It carries out the reaction ATP + protein L-histidine = ADP + protein N-phospho-L-histidine.. With respect to regulation, activity is regulated by agonists and antagonists. Binding of agonists such as toluene or benzene to TmoS stimulates autophosphorylation. Toluene causes the most pronounced increase, followed by benzene, chlorobenzene and ethylbenzene. Activity is inhibited by antagonists such as o-xylene, o-chlorotoluene and trimethylbenzene isomers, which bind to TmoS but do not stimulate autophosphorylation. Its function is as follows. Member of the two-component regulatory system TmoS/TmoT involved in the regulation of toluene degradation. Probably phosphorylates TmoT via a four-step phosphorelay in response to toluene. Can also be induced by benzene and ethylbenzene. This Ectopseudomonas mendocina (Pseudomonas mendocina) protein is Sensor histidine kinase TmoS (tmoS).